The chain runs to 57 residues: Large ribosomal subunit protein bL32 (57 aa).

Residues 1–19 (MAVPKRRKSRSNTRSRRSQ) show a composition bias toward basic residues. Residues 1-22 (MAVPKRRKSRSNTRSRRSQWKA) are disordered.

The protein belongs to the bacterial ribosomal protein bL32 family.

This chain is Large ribosomal subunit protein bL32, found in Mycobacterium tuberculosis (strain ATCC 25177 / H37Ra).